We begin with the raw amino-acid sequence, 500 residues long: Lysine--tRNA ligase (500 aa).

Positions 409 and 416 each coordinate Mg(2+).

This sequence belongs to the class-II aminoacyl-tRNA synthetase family. Homodimer. Mg(2+) serves as cofactor.

The protein resides in the cytoplasm. It carries out the reaction tRNA(Lys) + L-lysine + ATP = L-lysyl-tRNA(Lys) + AMP + diphosphate. The sequence is that of Lysine--tRNA ligase from Lysinibacillus sphaericus (strain C3-41).